The chain runs to 499 residues: Glutamyl-tRNA(Gln) amidotransferase subunit A (499 aa).

Active-site charge relay system residues include Lys75 and Ser150. The active-site Acyl-ester intermediate is Ser174.

It belongs to the amidase family. GatA subfamily. In terms of assembly, heterotrimer of A, B and C subunits.

The catalysed reaction is L-glutamyl-tRNA(Gln) + L-glutamine + ATP + H2O = L-glutaminyl-tRNA(Gln) + L-glutamate + ADP + phosphate + H(+). Functionally, allows the formation of correctly charged Gln-tRNA(Gln) through the transamidation of misacylated Glu-tRNA(Gln) in organisms which lack glutaminyl-tRNA synthetase. The reaction takes place in the presence of glutamine and ATP through an activated gamma-phospho-Glu-tRNA(Gln). The polypeptide is Glutamyl-tRNA(Gln) amidotransferase subunit A (Ralstonia pickettii (strain 12J)).